Reading from the N-terminus, the 683-residue chain is MLFIFNFLFSPLPTPALICLLTFGTAIFLWLINRPQPVLPLIDLDNQSVGIEGGARRGAFQKNNDLILYYFSDAKTLYENFQRGLAVSDNGPCLGYRKPNQPYKWISYKQVSDRAEYLGSCLLHKGYKSSQDQFVGIFAQNRPEWVISELACYTYSMVAVPLYDTLGTEAIIFVINRADIPVVICDTPQKATMLVENVEKGLTPGLKTIILMDPFDDDLMKRGEKCGVEMLSLHDAENIGKENFKKPVPPKPEDLSVICFTSGTTGDPKGAMLTHENVVSNMAAFLKFLEPIFQPTSDDVTISYLPLAHMFERLVQGILFSCGGKIGFFQGDIRLLPDDMKALKPTVFPTVPRLLNRVYDKVQNEAKTPLKKFLLNLAIISKFNEVKNGIIRRDSLWDKLVFSKIQGSLGGKVRLMITGAAPISTPVLTFFRAAMGCWVFEAYGQTECTGGCSITSPGDWTAGHVGTPVACNFVKLEDVADMNYFSVNNEGEICIKGNNVFKGYLKDPEKTQEVLDKDGWLHTGDIGRWLPNGTLKIVDRKKNIFKLAQGEYIAPEKIENVYSRSRPVLQVFVHGESLRSFLIGVVVPDPDSLPSFAAKIGVKGSFEELCKNQCVKEAILEDLQKIGKEGGLKSFEQVKSIFVHPEPFTIENGLLTPTLKAKRVELAKFFQTQIKSLYESIEE.

A helical; Signal-anchor for type III membrane protein transmembrane segment spans residues 12–32; sequence LPTPALICLLTFGTAIFLWLI. The Cytoplasmic segment spans residues 33–683; that stretch reads NRPQPVLPLI…IKSLYESIEE (651 aa). The residue at position 361 (Lys361) is an N6-acetyllysine.

It belongs to the ATP-dependent AMP-binding enzyme family.

The protein resides in the mitochondrion. It localises to the endoplasmic reticulum. It is found in the mitochondrion outer membrane. Its subcellular location is the endoplasmic reticulum membrane. The protein localises to the cell membrane. It carries out the reaction a long-chain fatty acid + ATP + CoA = a long-chain fatty acyl-CoA + AMP + diphosphate. It catalyses the reaction (5Z,8Z,11Z,14Z)-eicosatetraenoate + ATP + CoA = (5Z,8Z,11Z,14Z)-eicosatetraenoyl-CoA + AMP + diphosphate. The catalysed reaction is hexadecanoate + ATP + CoA = hexadecanoyl-CoA + AMP + diphosphate. The enzyme catalyses (E)-hexadec-2-enoate + ATP + CoA = (2E)-hexadecenoyl-CoA + AMP + diphosphate. It carries out the reaction 15-hydroxy-(5Z,8Z,11Z,13E)-eicosatetraenoate + ATP + CoA = 15-hydroxy-(5Z,8Z,11Z,13E)-eicosatetraenoyl-CoA + AMP + diphosphate. It catalyses the reaction 12-hydroxy-(5Z,8Z,10E,14Z)-eicosatetraenoate + ATP + CoA = 12-hydroxy-(5Z,8Z,10E,14Z)-eicosatetraenoyl-CoA + AMP + diphosphate. The catalysed reaction is 5-hydroxy-(6E,8Z,11Z,14Z)-eicosatetraenoate + ATP + CoA = 5-hydroxy-(6E,8Z,11Z,14Z)-eicosatetraenoyl-CoA + AMP + diphosphate. The enzyme catalyses 14,15-epoxy-(5Z,8Z,11Z)-eicosatrienoate + ATP + CoA = 14,15-epoxy-(5Z,8Z,11Z)-eicosatrienoyl-CoA + AMP + diphosphate. It carries out the reaction 11,12-epoxy-(5Z,8Z,14Z)-eicosatrienoate + ATP + CoA = 11,12-epoxy-(5Z,8Z,14Z)-eicosatrienoyl-CoA + AMP + diphosphate. It catalyses the reaction (9Z)-octadecenoate + ATP + CoA = (9Z)-octadecenoyl-CoA + AMP + diphosphate. Catalyzes the conversion of long-chain fatty acids to their active form acyl-CoAs for both synthesis of cellular lipids, and degradation via beta-oxidation. ACSL5 may activate fatty acids from exogenous sources for the synthesis of triacylglycerol destined for intracellular storage. It was suggested that it may also stimulate fatty acid oxidation. At the villus tip of the crypt-villus axis of the small intestine may sensitize epithelial cells to apoptosis specifically triggered by the death ligand TRAIL. May have a role in the survival of glioma cells. Utilizes a wide range of saturated fatty acids with a preference for C16-C18 unsaturated fatty acids. The sequence is that of Long-chain-fatty-acid--CoA ligase 5 from Mus musculus (Mouse).